The following is a 122-amino-acid chain: Non-specific lipid-transfer protein (122 aa).

An N-terminal signal peptide occupies residues 1 to 19 (MGVSRACFVVMVVVYMVVA). Positions 20–29 (ATPNVKLAEA) are excised as a propeptide. 4 cysteine pairs are disulfide-bonded: Cys32-Cys81, Cys42-Cys58, Cys59-Cys104, and Cys79-Cys118.

As to quaternary structure, monomer.

Its function is as follows. Plant non-specific lipid-transfer proteins transfer phospholipids as well as galactolipids across membranes. May play a role in wax or cutin deposition in the cell walls of expanding epidermal cells and certain secretory tissues. Binds saturated fatty acids, unsaturated fatty acids, lysolipids and, with highest efficiency, jasmonic acid. Has weak antimicrobial activity against fungi. Inhibits spore germination and hyphae elongation in A.niger VKM F-2259 and N.crassa VKM F-184. Has no antibacterial activity against A.tumefaciens A281, C.michiganensis VKM Ac-144 and P.syringae VKM B-1546. The protein is Non-specific lipid-transfer protein of Anethum graveolens (Dill).